We begin with the raw amino-acid sequence, 1091 residues long: ATP-dependent helicase/deoxyribonuclease subunit B (1091 aa).

The protein belongs to the helicase family. AddB/RexB type 2 subfamily. As to quaternary structure, heterodimer of AddA and RexB. The cofactor is Mg(2+).

Functionally, the heterodimer acts as both an ATP-dependent DNA helicase and an ATP-dependent, dual-direction single-stranded exonuclease. Recognizes the chi site generating a DNA molecule suitable for the initiation of homologous recombination. This subunit has 5' -&gt; 3' nuclease activity but not helicase activity. This chain is ATP-dependent helicase/deoxyribonuclease subunit B, found in Streptococcus pneumoniae (strain ATCC 700669 / Spain 23F-1).